Consider the following 642-residue polypeptide: 3D-(3,5/4)-trihydroxycyclohexane-1,2-dione hydrolase (642 aa).

Glu71 lines the thiamine diphosphate pocket. Positions 446 to 526 (SLPGDVQRIW…INILVFDNSG (81 aa)) are thiamine pyrophosphate binding. Mg(2+) contacts are provided by Asp497 and Asn524.

It belongs to the TPP enzyme family. Mg(2+) serves as cofactor. It depends on thiamine diphosphate as a cofactor.

It catalyses the reaction 3D-3,5/4-trihydroxycyclohexane-1,2-dione + H2O = 5-deoxy-D-glucuronate + H(+). It participates in polyol metabolism; myo-inositol degradation into acetyl-CoA; acetyl-CoA from myo-inositol: step 3/7. Functionally, involved in the cleavage of the C1-C2 bond of 3D-(3,5/4)-trihydroxycyclohexane-1,2-dione (THcHDO) to yield 5-deoxy-glucuronate (5DG). This Lacticaseibacillus casei (Lactobacillus casei) protein is 3D-(3,5/4)-trihydroxycyclohexane-1,2-dione hydrolase.